The primary structure comprises 211 residues: Holliday junction branch migration complex subunit RuvA (211 aa).

The tract at residues 1–70 (MIQFLQGQVV…QDQIALFGFG (70 aa)) is domain I. A domain II region spans residues 71-149 (RLAERDLFGQ…QWHKLQMGTG (79 aa)). The tract at residues 150–158 (ETDSTLPTT) is flexible linker. The tract at residues 158–211 (TALLEDLEMTLLALGYTQTEIQQAIAMVSQVPDVAQSEDPEVWIRQAIGWLSDH) is domain III.

It belongs to the RuvA family. In terms of assembly, homotetramer. Forms an RuvA(8)-RuvB(12)-Holliday junction (HJ) complex. HJ DNA is sandwiched between 2 RuvA tetramers; dsDNA enters through RuvA and exits via RuvB. An RuvB hexamer assembles on each DNA strand where it exits the tetramer. Each RuvB hexamer is contacted by two RuvA subunits (via domain III) on 2 adjacent RuvB subunits; this complex drives branch migration. In the full resolvosome a probable DNA-RuvA(4)-RuvB(12)-RuvC(2) complex forms which resolves the HJ.

Its subcellular location is the cytoplasm. The RuvA-RuvB-RuvC complex processes Holliday junction (HJ) DNA during genetic recombination and DNA repair, while the RuvA-RuvB complex plays an important role in the rescue of blocked DNA replication forks via replication fork reversal (RFR). RuvA specifically binds to HJ cruciform DNA, conferring on it an open structure. The RuvB hexamer acts as an ATP-dependent pump, pulling dsDNA into and through the RuvAB complex. HJ branch migration allows RuvC to scan DNA until it finds its consensus sequence, where it cleaves and resolves the cruciform DNA. In Synechocystis sp. (strain ATCC 27184 / PCC 6803 / Kazusa), this protein is Holliday junction branch migration complex subunit RuvA.